The following is a 427-amino-acid chain: GTPase ERA-like, chloroplastic (427 aa).

Residues 1 to 39 (MAVSPHISPTLSRYKFFSTSVVENPNFSPYRIYSRRRVT) constitute a chloroplast transit peptide. Residues 128 to 298 (RSGYVAVVGM…KEWILSKLPF (171 aa)) form the Era-type G domain. The G1 stretch occupies residues 136–143 (GMPNVGKS). 136–143 (GMPNVGKS) serves as a coordination point for GTP. The interval 162 to 166 (QTTRH) is G2. The interval 183 to 186 (DTPG) is G3. GTP contacts are provided by residues 183–187 (DTPGV) and 248–251 (NKKD). The segment at 248–251 (NKKD) is G4. The G5 stretch occupies residues 277-279 (VSA). A KH type-2 domain is found at 329-406 (YRNEVPYACQ…FLEVEVKVKE (78 aa)).

The protein belongs to the TRAFAC class TrmE-Era-EngA-EngB-Septin-like GTPase superfamily. Era GTPase family.

It is found in the plastid. The protein resides in the chloroplast stroma. Its subcellular location is the chloroplast nucleoid. Functionally, nuclear genome-encoded probable GTPase involved in ribosome biogenesis in chloroplasts. Plays a role in 16S rRNA maturation in plastids and may contribute to the assembly of the small (30S) ribosomal subunit. In Arabidopsis thaliana (Mouse-ear cress), this protein is GTPase ERA-like, chloroplastic.